The chain runs to 265 residues: uncharacterized protein (265 aa).

The N-terminal stretch at 1–20 (MSRAMALFFVLCWIQDEIVL) is a signal peptide. A helical membrane pass occupies residues 192–212 (IIAAVSGVAILMAIVLLLLGL).

It is found in the membrane. This is an uncharacterized protein from Homo sapiens (Human).